The sequence spans 285 residues: Acrosomal protein SP-10 (285 aa).

The N-terminal stretch at 1 to 21 (MNMFLLLMSLYLLGSARGTSG) is a signal peptide. The disordered stretch occupies residues 64–200 (TLSEHGSSEH…GEQPSGAPIS (137 aa)). Repeat copies occupy residues 66 to 70 (SEHGS), 71 to 75 (SEHGS), 85 to 89 (PGEHA), 91 to 95 (SEHAS), 110 to 114 (VGEQP), 115 to 119 (SGEQP), 120 to 124 (SGEHL), 125 to 129 (SGEQS), 130 to 134 (LGEHA), 135 to 139 (SGEQP), 145 to 149 (SGEHA), 150 to 154 (SGEQP), 155 to 159 (SGEHA), 160 to 164 (SGEQP), 165 to 169 (SGEQP), 170 to 174 (SGEHA), 175 to 179 (SGEQS), 180 to 184 (LGEHA), and 190 to 194 (SGEQP). Residues 66 to 95 (SEHGSSEHGSREHTVAEHTPGEHAESEHAS) form a 3 X 5 AA repeats of S-E-H-[GA]-A region. Residues 69 to 95 (GSSEHGSREHTVAEHTPGEHAESEHAS) are compositionally biased toward basic and acidic residues. The tract at residues 85–184 (PGEHAESEHA…SGEQSLGEHA (100 aa)) is 7 X 5 AA repeats of S-G-E-H-[AL]. The tract at residues 110 to 194 (VGEQPSGEQP…LSEKPSGEQP (85 aa)) is 9 X 5 AA repeats of [SV]-G-E-Q-[PSA]. N278 carries an N-linked (GlcNAc...) asparagine glycan.

In terms of tissue distribution, testis.

The protein resides in the cytoplasmic vesicle. The protein localises to the secretory vesicle. It is found in the acrosome. This is Acrosomal protein SP-10 (ACRV1) from Papio hamadryas (Hamadryas baboon).